The primary structure comprises 877 residues: Mediator of RNA polymerase II transcription subunit 16 (877 aa).

9 WD repeats span residues 21 to 71, 72 to 119, 120 to 165, 166 to 203, 204 to 257, 258 to 334, 335 to 415, 416 to 460, and 461 to 495; these read WEKW…EHPW, DLHS…NSWE, SSVG…VKFS, PSLT…LTST, ESLC…RIDT, EILP…DKQP, TILK…RPVD, EPAM…LSPS, and MGHP…LLHV. The interval 848–877 is disordered; sequence PAFVQLGPQSTHHSPRTPRSLDHLHPEDRP. A compositionally biased stretch (basic and acidic residues) spans 866 to 877; the sequence is RSLDHLHPEDRP.

It belongs to the Mediator complex subunit 16 family. Component of the Mediator complex, which is composed of MED1, MED4, MED6, MED7, MED8, MED9, MED10, MED11, MED12, MED13, MED13L, MED14, MED15, MED16, MED17, MED18, MED19, MED20, MED21, MED22, MED23, MED24, MED25, MED26, MED27, MED29, MED30, MED31, CCNC, CDK8 and CDC2L6/CDK11. The MED12, MED13, CCNC and CDK8 subunits form a distinct module termed the CDK8 module. Mediator containing the CDK8 module is less active than Mediator lacking this module in supporting transcriptional activation. Individual preparations of the Mediator complex lacking one or more distinct subunits have been variously termed ARC, CRSP, DRIP, PC2, SMCC and TRAP.

Its subcellular location is the nucleus. Component of the Mediator complex, a coactivator involved in the regulated transcription of nearly all RNA polymerase II-dependent genes. Mediator functions as a bridge to convey information from gene-specific regulatory proteins to the basal RNA polymerase II transcription machinery. Mediator is recruited to promoters by direct interactions with regulatory proteins and serves as a scaffold for the assembly of a functional preinitiation complex with RNA polymerase II and the general transcription factors. The polypeptide is Mediator of RNA polymerase II transcription subunit 16 (MED16) (Homo sapiens (Human)).